Reading from the N-terminus, the 124-residue chain is uncharacterized protein (124 aa).

Residues 13–33 (IIFMALYFVITGIVIRLIGYS) form a helical membrane-spanning segment.

Its subcellular location is the membrane. This is an uncharacterized protein from Bacillus anthracis.